We begin with the raw amino-acid sequence, 472 residues long: Squamosa promoter-binding-like protein 18 (472 aa).

The interval 89–110 is disordered; it reads AKVPPSTSTLKRPRGGGGGGGG. The SBP-type zinc-finger motif lies at 112-189; sequence CPSCAVDGCK…DGHNRRRRKP (78 aa). Zn(2+) contacts are provided by Cys115, Cys120, Cys137, His140, Cys156, Cys159, His163, and Cys175. The Bipartite nuclear localization signal motif lies at 172–188; sequence KRSCRKRLDGHNRRRRK. Disordered regions lie at residues 179-218, 233-261, and 358-381; these read LDGH…RPEP, SHHH…TAAF, and SVDV…HHHH. Residues 192 to 209 show a composition bias toward polar residues; that stretch reads DSMSSGSFMTSQQGTRFA. Residues 252 to 261 are compositionally biased toward low complexity; sequence SPSSATTAAF.

In terms of tissue distribution, expressed in young panicles.

The protein localises to the nucleus. In terms of biological role, trans-acting factor that binds specifically to the consensus nucleotide sequence 5'-TNCGTACAA-3'. May be involved in panicle development. The polypeptide is Squamosa promoter-binding-like protein 18 (SPL18) (Oryza sativa subsp. japonica (Rice)).